The sequence spans 140 residues: Nucleoside diphosphate kinase (140 aa).

ATP contacts are provided by Lys11, Phe59, Arg87, Thr93, Arg104, and Asn114. Catalysis depends on His117, which acts as the Pros-phosphohistidine intermediate.

It belongs to the NDK family. Homotetramer. Mg(2+) is required as a cofactor.

The protein resides in the cytoplasm. The enzyme catalyses a 2'-deoxyribonucleoside 5'-diphosphate + ATP = a 2'-deoxyribonucleoside 5'-triphosphate + ADP. It carries out the reaction a ribonucleoside 5'-diphosphate + ATP = a ribonucleoside 5'-triphosphate + ADP. Major role in the synthesis of nucleoside triphosphates other than ATP. The ATP gamma phosphate is transferred to the NDP beta phosphate via a ping-pong mechanism, using a phosphorylated active-site intermediate. In Rhizobium rhizogenes (strain K84 / ATCC BAA-868) (Agrobacterium radiobacter), this protein is Nucleoside diphosphate kinase.